We begin with the raw amino-acid sequence, 454 residues long: Rhizobactin siderophore biosynthesis protein RhbE (454 aa).

7 to 13 (AGIGIGP) lines the FAD pocket.

The protein belongs to the lysine N(6)-hydroxylase/L-ornithine N(5)-oxygenase family. The cofactor is FAD.

The protein operates within siderophore biosynthesis; rhizobactin biosynthesis. The polypeptide is Rhizobactin siderophore biosynthesis protein RhbE (rhbE) (Rhizobium meliloti (strain 1021) (Ensifer meliloti)).